The primary structure comprises 160 residues: MFKTEFEFPEELKTKLQEHINYFPKKRQAILLCLHEIQNYYGYIPPESLKPLADMLELPLNHVEGVVAFYDMFDREDKAKYRIRVCVSIVCHLMGTNKLLKALENILGIKPGEVTPDGKFKIVPVQCLGACSEAPVFMVNDDEYKFESEVQLNEILSRYT.

Residues Cys86, Cys91, Cys127, and Cys131 each coordinate [2Fe-2S] cluster.

It belongs to the complex I 24 kDa subunit family. [2Fe-2S] cluster serves as cofactor.

It carries out the reaction a quinone + NADH + 5 H(+)(in) = a quinol + NAD(+) + 4 H(+)(out). Its function is as follows. NDH-1 shuttles electrons from NADH, via FMN and iron-sulfur (Fe-S) centers, to quinones in the respiratory chain. Couples the redox reaction to proton translocation (for every two electrons transferred, four hydrogen ions are translocated across the cytoplasmic membrane), and thus conserves the redox energy in a proton gradient. This is NADH-quinone oxidoreductase subunit E (nuoE) from Aquifex aeolicus (strain VF5).